The sequence spans 354 residues: 3'-5' exonuclease (354 aa).

Positions 1 to 120 (MERYLTKMPI…PSPEKEKPEK (120 aa)) are disordered. The span at 13-50 (KANEVPKKEAFAKKETPKVARKATKTDTPKELKDKENA) shows a compositional bias: basic and acidic residues. The span at 59-70 (TKGRPGRPAAKR) shows a compositional bias: basic residues. Residues 71–91 (KNLDTPDVKDEKIAMEEENPP) show a composition bias toward basic and acidic residues. A phosphoserine mark is found at Ser-104, Ser-110, and Ser-112. The 166-residue stretch at 149–314 (WVEKQKDDVV…GQVIYRELER (166 aa)) folds into the 3'-5' exonuclease domain. Residues Asp-163, Glu-165, and Asp-301 each coordinate Mg(2+).

It belongs to the WRNexo family.

Its subcellular location is the nucleus. In terms of biological role, has exonuclease activity on both single-stranded and duplex templates bearing overhangs, but not blunt ended duplex DNA, and cleaves in a 3'-5' direction. Essential for the formation of DNA replication focal centers. Has an important role in maintaining genome stability. The chain is 3'-5' exonuclease from Drosophila sechellia (Fruit fly).